An 82-amino-acid polypeptide reads, in one-letter code: Small ribosomal subunit protein bS18 (82 aa).

The tract at residues 1-20 (MVDINQIPTRRPFHRRHKTC) is disordered.

The protein belongs to the bacterial ribosomal protein bS18 family. As to quaternary structure, part of the 30S ribosomal subunit. Forms a tight heterodimer with protein bS6.

Functionally, binds as a heterodimer with protein bS6 to the central domain of the 16S rRNA, where it helps stabilize the platform of the 30S subunit. The protein is Small ribosomal subunit protein bS18 of Brucella suis (strain ATCC 23445 / NCTC 10510).